A 77-amino-acid polypeptide reads, in one-letter code: U8-lycotoxin-Ls1q (77 aa).

Residues 1 to 20 (MKLMIFAGLVLFAIVSLIEA) form the signal peptide. Positions 21–26 (QAEHEK) are excised as a propeptide.

It belongs to the neurotoxin 19 (CSTX) family. 08 (U8-Lctx) subfamily. Contains 4 disulfide bonds. Expressed by the venom gland.

Its subcellular location is the secreted. This is U8-lycotoxin-Ls1q from Lycosa singoriensis (Wolf spider).